Reading from the N-terminus, the 429-residue chain is DNA polymerase delta small subunit (429 aa).

It belongs to the DNA polymerase delta/II small subunit family. As to quaternary structure, heterodimer with subunits of 125 kDa and 50 kDa.

Its subcellular location is the nucleus. The catalysed reaction is DNA(n) + a 2'-deoxyribonucleoside 5'-triphosphate = DNA(n+1) + diphosphate. Its function is as follows. The function of the small subunit is not yet clear. In Oryza sativa subsp. japonica (Rice), this protein is DNA polymerase delta small subunit (POLD2).